A 423-amino-acid chain; its full sequence is 3-phosphoshikimate 1-carboxyvinyltransferase (423 aa).

3-phosphoshikimate contacts are provided by K21, S22, and R26. Residue K21 participates in phosphoenolpyruvate binding. Residues G92 and R120 each contribute to the phosphoenolpyruvate site. S164, Q166, D312, and K339 together coordinate 3-phosphoshikimate. Q166 serves as a coordination point for phosphoenolpyruvate. D312 functions as the Proton acceptor in the catalytic mechanism. Residues R343 and R385 each coordinate phosphoenolpyruvate.

This sequence belongs to the EPSP synthase family. Monomer.

The protein localises to the cytoplasm. The catalysed reaction is 3-phosphoshikimate + phosphoenolpyruvate = 5-O-(1-carboxyvinyl)-3-phosphoshikimate + phosphate. The protein operates within metabolic intermediate biosynthesis; chorismate biosynthesis; chorismate from D-erythrose 4-phosphate and phosphoenolpyruvate: step 6/7. Catalyzes the transfer of the enolpyruvyl moiety of phosphoenolpyruvate (PEP) to the 5-hydroxyl of shikimate-3-phosphate (S3P) to produce enolpyruvyl shikimate-3-phosphate and inorganic phosphate. This Thermoanaerobacter pseudethanolicus (strain ATCC 33223 / 39E) (Clostridium thermohydrosulfuricum) protein is 3-phosphoshikimate 1-carboxyvinyltransferase.